The primary structure comprises 553 residues: MPTDIEIADAAKMQPITEIAQKLGLSSDDIEQYGHYKAKINLPVKEVEGKKHKLILVTGINPTSAGEGKSTVLVGLGDALNQLGHQTTIAMREPSMGPVFGIKGGATGGGYSQVVPMEDINLHFTGDMHALTSANNTLAALIDNYIMRDNVLGLDPRRIIWKRVEDVNDRVLRNVVTGLGGIMQGVPRETGFDITAASEMMAILCLSESLHNLKKRIGRIVVGYTYEKKPVTVDQLGFTGAITLLLKDAIKPNLVQTLDHTPAIIHGGPFANIAHGCNSVLATQIALKTSDYTVTECGFGADLGAEKFLDIKRPVLGETPNAVVIVATARALKLNGGADKDELTKEDIPALEKGMANLRRHVENMQKYNLPIVVAINHFNSDTEAEIKTIQDACAEMGVKAIEVDAWAKGGQGTQDLAKEVVKLADEELEFHELYKNSDSIEDKLSAIATKIYGAKRVVLSKKAKRQIKTFNEQGWNDLPVCIAKTQYSFTDDQTKLGAPTDFDFHIRDLVPKLGAGFIVALSGTMMTMPGLAKHPAAENMDIDDNGQIAGLF.

ATP is bound at residue 63 to 70 (TSAGEGKS).

It belongs to the formate--tetrahydrofolate ligase family.

It carries out the reaction (6S)-5,6,7,8-tetrahydrofolate + formate + ATP = (6R)-10-formyltetrahydrofolate + ADP + phosphate. It functions in the pathway one-carbon metabolism; tetrahydrofolate interconversion. This Lactobacillus acidophilus (strain ATCC 700396 / NCK56 / N2 / NCFM) protein is Formate--tetrahydrofolate ligase 2.